The primary structure comprises 383 residues: Protein pelota homolog (383 aa).

This sequence belongs to the eukaryotic release factor 1 family. Pelota subfamily. As to quaternary structure, component of the Pelota-HBS1L complex, also named Dom34-Hbs1 complex, composed of PELO and HBS1L. The cofactor is a divalent metal cation.

The protein localises to the cytoplasm. Functionally, component of the Pelota-HBS1L complex, a complex that recognizes stalled ribosomes and triggers the No-Go Decay (NGD) pathway. In the Pelota-HBS1L complex, PELO recognizes ribosomes stalled at the 3' end of an mRNA and engages stalled ribosomes by destabilizing mRNA in the mRNA channel. Following mRNA extraction from stalled ribosomes by the SKI complex, the Pelota-HBS1L complex promotes recruitment of ABCE1, which drives the disassembly of stalled ribosomes, followed by degradation of damaged mRNAs as part of the NGD pathway. This Xenopus laevis (African clawed frog) protein is Protein pelota homolog (pelo).